A 326-amino-acid chain; its full sequence is tRNA-modifying protein YgfZ (326 aa).

Folate contacts are provided by tryptophan 27 and tryptophan 189.

It belongs to the tRNA-modifying YgfZ family.

The protein localises to the cytoplasm. Functionally, folate-binding protein involved in regulating the level of ATP-DnaA and in the modification of some tRNAs. It is probably a key factor in regulatory networks that act via tRNA modification, such as initiation of chromosomal replication. In Escherichia coli O6:K15:H31 (strain 536 / UPEC), this protein is tRNA-modifying protein YgfZ.